A 141-amino-acid chain; its full sequence is MDALFVFIIILATAVICLFLFQAYTIYDNYHNIIEFNEKYGGLEYSRSPGGLYIDKRVFDPNDSETDPKAKWRCVNYNNNQYASASKFGYLATSSRNPVLFTNLEDCVYYNYTRGEIGTIWNPCAEYGEGSAECSTLKSHL.

Residues 1–21 (MDALFVFIIILATAVICLFLF) form a helical; Signal-anchor for type II membrane protein membrane-spanning segment. At 22–141 (QAYTIYDNYH…AECSTLKSHL (120 aa)) the chain is on the virion surface side.

Belongs to the poxviridae A28 protein family. Contains two intramolecular disulfide bonds. They are created by the viral disulfide bond formation pathway, a poxvirus-specific pathway that operates on the cytoplasmic side of the MV membranes.

It localises to the virion membrane. Envelope protein required for virus entry into host cell and for cell-cell fusion (syncytium formation). The polypeptide is Envelope protein A28 homolog (Fowlpox virus (strain NVSL) (FPV)).